A 218-amino-acid chain; its full sequence is tRNA (guanine-N(7)-)-methyltransferase (218 aa).

Residues E43, D68, E101, and N124 each coordinate S-adenosyl-L-methionine. Positions 128 and 160 each coordinate substrate.

Belongs to the class I-like SAM-binding methyltransferase superfamily. TrmB family.

The enzyme catalyses guanosine(46) in tRNA + S-adenosyl-L-methionine = N(7)-methylguanosine(46) in tRNA + S-adenosyl-L-homocysteine. It functions in the pathway tRNA modification; N(7)-methylguanine-tRNA biosynthesis. Its function is as follows. Catalyzes the formation of N(7)-methylguanine at position 46 (m7G46) in tRNA. This is tRNA (guanine-N(7)-)-methyltransferase from Acetivibrio thermocellus (strain ATCC 27405 / DSM 1237 / JCM 9322 / NBRC 103400 / NCIMB 10682 / NRRL B-4536 / VPI 7372) (Clostridium thermocellum).